A 950-amino-acid chain; its full sequence is General transcription factor II-I repeat domain-containing protein 2 (950 aa).

2 GTF2I-like repeats span residues 100 to 194 (QVDS…QPGG) and 324 to 418 (LSSL…SNVG).

This sequence belongs to the TFII-I family.

The protein localises to the nucleus. This chain is General transcription factor II-I repeat domain-containing protein 2 (GTF2IRD2), found in Bos taurus (Bovine).